The primary structure comprises 70 residues: DNA gyrase inhibitor YacG (70 aa).

Zn(2+) is bound by residues cysteine 20, cysteine 23, cysteine 35, and cysteine 39.

It belongs to the DNA gyrase inhibitor YacG family. Interacts with GyrB. Requires Zn(2+) as cofactor.

Its function is as follows. Inhibits all the catalytic activities of DNA gyrase by preventing its interaction with DNA. Acts by binding directly to the C-terminal domain of GyrB, which probably disrupts DNA binding by the gyrase. This chain is DNA gyrase inhibitor YacG, found in Rhizobium leguminosarum bv. trifolii (strain WSM2304).